Here is a 319-residue protein sequence, read N- to C-terminus: Protease HtpX homolog (319 aa).

2 helical membrane passes run 6–26 and 28–48; these read TAML…VIGG and GGMM…YWNS. His-130 is a Zn(2+) binding site. Glu-131 is an active-site residue. His-134 serves as a coordination point for Zn(2+). The next 2 membrane-spanning stretches (helical) occupy residues 145–165 and 172–192; these read MTAT…FFGG and PLGF…AALV. Glu-201 contacts Zn(2+). The segment at 280–319 is disordered; it reads EMSTGSTAPVRPDNAVRKSRSVPRTGWGRGGSEPPKGPWS.

It belongs to the peptidase M48B family. Zn(2+) is required as a cofactor.

The protein localises to the cell inner membrane. This chain is Protease HtpX homolog, found in Sinorhizobium medicae (strain WSM419) (Ensifer medicae).